A 296-amino-acid polypeptide reads, in one-letter code: MPELPEVETVRRGLAPALVGARFSRVTLRRANLRFPFPERFAARLEGRTVTGLARRAKYLTAALDSGETLVMHLGMSGRFDVALPDGSNLSPGDFYLEGAQGTPKHDHVVMAMSTGATVTYNDARRFGFMDLVPSAELAACRHFARMGVEPLDGLTGAVIARLFRHKIAPLKAALLDQRLIAGLGNIYVCEALHRARLHPEAPAGSLARPDGRPTPEANALAKAIVQVLEEAVKAGGSTLRDYAHTDGSAGAFQHAFRVYDRVGLPCSRPGCAGAITRIVQANRSTFFCATCQPPG.

The Schiff-base intermediate with DNA role is filled by Pro-2. Glu-3 (proton donor) is an active-site residue. The Proton donor; for beta-elimination activity role is filled by Lys-58. Residues His-106, Arg-125, and Lys-167 each coordinate DNA. The FPG-type zinc finger occupies 258–294; that stretch reads RVYDRVGLPCSRPGCAGAITRIVQANRSTFFCATCQP. The active-site Proton donor; for delta-elimination activity is Arg-284.

Belongs to the FPG family. As to quaternary structure, monomer. It depends on Zn(2+) as a cofactor.

The enzyme catalyses Hydrolysis of DNA containing ring-opened 7-methylguanine residues, releasing 2,6-diamino-4-hydroxy-5-(N-methyl)formamidopyrimidine.. The catalysed reaction is 2'-deoxyribonucleotide-(2'-deoxyribose 5'-phosphate)-2'-deoxyribonucleotide-DNA = a 3'-end 2'-deoxyribonucleotide-(2,3-dehydro-2,3-deoxyribose 5'-phosphate)-DNA + a 5'-end 5'-phospho-2'-deoxyribonucleoside-DNA + H(+). Involved in base excision repair of DNA damaged by oxidation or by mutagenic agents. Acts as a DNA glycosylase that recognizes and removes damaged bases. Has a preference for oxidized purines, such as 7,8-dihydro-8-oxoguanine (8-oxoG). Has AP (apurinic/apyrimidinic) lyase activity and introduces nicks in the DNA strand. Cleaves the DNA backbone by beta-delta elimination to generate a single-strand break at the site of the removed base with both 3'- and 5'-phosphates. The polypeptide is Formamidopyrimidine-DNA glycosylase (Methylobacterium radiotolerans (strain ATCC 27329 / DSM 1819 / JCM 2831 / NBRC 15690 / NCIMB 10815 / 0-1)).